The primary structure comprises 294 residues: Keratin-like protein KRT222 (294 aa).

Residues 1–150 (MELSQLLNEI…RLLEQEEIRY (150 aa)) form the IF rod domain. A coiled-coil region spans residues 1 to 151 (MELSQLLNEI…LLEQEEIRYY (151 aa)).

Belongs to the intermediate filament family.

This chain is Keratin-like protein KRT222 (Krt222), found in Mus musculus (Mouse).